The sequence spans 421 residues: Adenylosuccinate synthetase (421 aa).

Residues 11–17 (GDEGKGK) and 39–41 (GHT) each bind GTP. Catalysis depends on Asp12, which acts as the Proton acceptor. Mg(2+) is bound by residues Asp12 and Gly39. Residues 12–15 (DEGK), 37–40 (NAGH), Thr129, Arg143, Asn219, Thr234, and Arg298 each bind IMP. The active-site Proton donor is the His40. 294–300 (VTTGRRR) lines the substrate pocket. Residues Arg300, 326 to 328 (KLD), and 409 to 411 (GTG) contribute to the GTP site.

It belongs to the adenylosuccinate synthetase family. As to quaternary structure, homodimer. Requires Mg(2+) as cofactor.

Its subcellular location is the cytoplasm. The catalysed reaction is IMP + L-aspartate + GTP = N(6)-(1,2-dicarboxyethyl)-AMP + GDP + phosphate + 2 H(+). The protein operates within purine metabolism; AMP biosynthesis via de novo pathway; AMP from IMP: step 1/2. In terms of biological role, plays an important role in the de novo pathway and in the salvage pathway of purine nucleotide biosynthesis. Catalyzes the first committed step in the biosynthesis of AMP from IMP. The sequence is that of Adenylosuccinate synthetase from Paracoccidioides lutzii (strain ATCC MYA-826 / Pb01) (Paracoccidioides brasiliensis).